Reading from the N-terminus, the 669-residue chain is Alpha-1,6-mannosylglycoprotein 6-beta-N-acetylglucosaminyltransferase (669 aa).

Residues Met-1 to Cys-7 lie on the Cytoplasmic side of the membrane. A helical; Signal-anchor for type II membrane protein membrane pass occupies residues Val-8 to Ile-28. Over Ser-29–Leu-669 the chain is Lumenal. N-linked (GlcNAc...) asparagine glycosylation is found at Asn-30, Asn-412, Asn-437, and Asn-626.

It belongs to the glycosyltransferase 18 family. In terms of tissue distribution, expressed in a complex subset of neurons in larvae and in the spermathecal and pharyngeal-intestinal valves and certain vulval cells of adults.

It is found in the golgi apparatus membrane. The catalysed reaction is N(4)-{beta-D-GlcNAc-(1-&gt;2)-[beta-D-GlcNAc-(1-&gt;4)]-alpha-D-Man-(1-&gt;3)-[beta-D-GlcNAc-(1-&gt;2)-alpha-D-Man-(1-&gt;6)]-beta-D-Man-(1-&gt;4)-beta-D-GlcNAc-(1-&gt;4)-beta-D-GlcNAc}-L-asparaginyl-[protein] + UDP-N-acetyl-alpha-D-glucosamine = N(4)-{beta-D-GlcNAc-(1-&gt;2)-[beta-D-GlcNAc-(1-&gt;4)]-alpha-D-Man-(1-&gt;3)-[beta-D-GlcNAc-(1-&gt;2)-[beta-D-GlcNAc-(1-&gt;6)]-alpha-D-Man-(1-&gt;6)]-beta-D-Man-(1-&gt;4)-beta-D-GlcNAc-(1-&gt;4)-beta-D-GlcNAc}-L-asparaginyl-[protein] + UDP + H(+). Its pathway is protein modification; protein glycosylation. In terms of biological role, catalyzes the addition of N-acetylglucosamine (GlcNAc) in beta 1-6 linkage to the alpha-linked mannose of biantennary N-linked oligosaccharides. The polypeptide is Alpha-1,6-mannosylglycoprotein 6-beta-N-acetylglucosaminyltransferase (gly-2) (Caenorhabditis elegans).